The sequence spans 334 residues: Protein-glutamate methylesterase/protein-glutamine glutaminase 1 (334 aa).

One can recognise a Response regulatory domain in the interval 2–120; that stretch reads NIGIVNDLPL…GAAGDTTKLL (119 aa). The residue at position 53 (D53) is a 4-aspartylphosphate. The region spanning 145–334 is the CheB-type methylesterase domain; that stretch reads RAGGGPLIAI…AGELAALARI (190 aa). Residues S157, H184, and D277 contribute to the active site.

The protein belongs to the CheB family. In terms of processing, phosphorylated by CheA. Phosphorylation of the N-terminal regulatory domain activates the methylesterase activity.

Its subcellular location is the cytoplasm. It catalyses the reaction [protein]-L-glutamate 5-O-methyl ester + H2O = L-glutamyl-[protein] + methanol + H(+). The enzyme catalyses L-glutaminyl-[protein] + H2O = L-glutamyl-[protein] + NH4(+). Its function is as follows. Involved in chemotaxis. Part of a chemotaxis signal transduction system that modulates chemotaxis in response to various stimuli. Catalyzes the demethylation of specific methylglutamate residues introduced into the chemoreceptors (methyl-accepting chemotaxis proteins or MCP) by CheR. Also mediates the irreversible deamidation of specific glutamine residues to glutamic acid. This chain is Protein-glutamate methylesterase/protein-glutamine glutaminase 1, found in Burkholderia lata (strain ATCC 17760 / DSM 23089 / LMG 22485 / NCIMB 9086 / R18194 / 383).